Consider the following 536-residue polypeptide: Signal peptide peptidase-like 5 (536 aa).

An N-terminal signal peptide occupies residues 1–29; the sequence is MSLPPFTCRLLAAAAALYLIGLLCVGADT. Residues 30–186 lie on the Lumenal side of the membrane; it reads KDVTAPKIPG…VELLLYAPKS (157 aa). Residues 94–170 form the PA domain; sequence SNLTSKLSWS…TSSGDALKKS (77 aa). N-linked (GlcNAc...) asparagine glycans are attached at residues N95 and N151. Residues 187–207 form a helical membrane-spanning segment; it reads PIVDYAVVFLWLMSVGTVFVA. Topologically, residues 208–243 are cytoplasmic; that stretch reads SVWSHVTSPKKNDEQYDELSPKKSSNVDATKGGAEE. The tract at residues 218 to 238 is disordered; the sequence is KNDEQYDELSPKKSSNVDATK. The helical transmembrane segment at 244 to 264 threads the bilayer; sequence ETLDISAMGAVIFVISASTFL. Residues 265–273 lie on the Lumenal side of the membrane; the sequence is VLLFFFMSS. Residues 274–296 form a helical membrane-spanning segment; the sequence is WFILILTIFFVIGGMQGMHNINV. Residues 297–318 are Cytoplasmic-facing; it reads TLITRRCSKCGQKNLKLPLLGN. The helical transmembrane segment at 319–339 threads the bilayer; it reads TSILSLVVLLFCFVVAILWFM. The Lumenal segment spans residues 340–344; it reads NRKTS. The helical transmembrane segment at 345-365 threads the bilayer; sequence HAWAGQDIFGICMMINVLQVA. The Cytoplasmic segment spans residues 366 to 374; sequence RLPNIRVAT. The chain crosses the membrane as a helical span at residues 375 to 395; it reads ILLCCAFFYDIFWVFISPLIF. The active site involves D384. Topologically, residues 396–428 are lumenal; the sequence is KQSVMIAVARGSKDTGESIPMLLRIPRLSDPWG. The helical transmembrane segment at 429–449 threads the bilayer; sequence GYNMIGFGDILFPGLLICFIF. The active site involves D437. Topologically, residues 450 to 463 are cytoplasmic; it reads RFDKENNKGVSNGY. The helical transmembrane segment at 464-484 threads the bilayer; it reads FPWLMFGYGLGLFLTYLGLYV. Residues 485–489 lie on the Lumenal side of the membrane; sequence MNGHG. The chain crosses the membrane as a helical span at residues 490-510; that stretch reads QPALLYLVPCTLGITVILGLV. The PAL motif lies at 491 to 493; the sequence is PAL. Over 511–536 the chain is Cytoplasmic; that stretch reads RKELRDLWNYGTQQPSAADVNPSPEA.

Belongs to the peptidase A22B family. In terms of processing, glycosylated.

Its subcellular location is the endosome membrane. In terms of biological role, intramembrane-cleaving aspartic protease (I-CLiP) that cleaves type II membrane signal peptides in the hydrophobic plane of the membrane. This chain is Signal peptide peptidase-like 5 (SPPL5), found in Arabidopsis thaliana (Mouse-ear cress).